A 359-amino-acid chain; its full sequence is 3-dehydroquinate synthase (359 aa).

Residues 69–74, 103–107, 127–128, Lys140, and Lys149 contribute to the NAD(+) site; these read DAEDGK, GAVTD, and TT. Residues Glu182, His244, and His260 each contribute to the Zn(2+) site.

It belongs to the sugar phosphate cyclases superfamily. Dehydroquinate synthase family. Requires NAD(+) as cofactor. The cofactor is Co(2+). Zn(2+) serves as cofactor.

The protein localises to the cytoplasm. It carries out the reaction 7-phospho-2-dehydro-3-deoxy-D-arabino-heptonate = 3-dehydroquinate + phosphate. Its pathway is metabolic intermediate biosynthesis; chorismate biosynthesis; chorismate from D-erythrose 4-phosphate and phosphoenolpyruvate: step 2/7. Catalyzes the conversion of 3-deoxy-D-arabino-heptulosonate 7-phosphate (DAHP) to dehydroquinate (DHQ). The polypeptide is 3-dehydroquinate synthase (Corynebacterium pseudotuberculosis (strain C231)).